We begin with the raw amino-acid sequence, 374 residues long: MAHSTPCSQTSLAVPNHFSLVSHVTVPSEGVMPSPLSLCRYLPRELSPSVDSRSCSIPLVAPRKAGKLFLGTTPPRAPGLPRRLAWFSIDWEQVCLMHRLGSGGFGSVYKATYHGVPVAIKQVNKCTEDLRASQRSFWAELNIAGLRHDNIVRVVAASTRTPEDSNSLGTIIMEFGGNVTLHQVIYDATRSPEPLSCRKQLSLGKCLKYSLDVVNGLLFLHSQSILHLDLKPANILISEQDVCKISDFGCSQKLQDLRGRQASPPHIGGTYTHQAPEILKGEIATPKADIYSFGITLWQMTTREVPYSGEPQYVQYAVVAYNLRPSLAGAVFTASLTGKALQNIIQSCWEARGLQRPSAELLQRDLKAFRGTLG.

The region spanning 94-370 is the Protein kinase domain; it reads VCLMHRLGSG…LLQRDLKAFR (277 aa). Residues 100-108 and lysine 121 each bind ATP; that span reads LGSGGFGSV. The active-site Proton acceptor is the aspartate 229.

The protein belongs to the protein kinase superfamily. Ser/Thr protein kinase family.

It carries out the reaction L-seryl-[protein] + ATP = O-phospho-L-seryl-[protein] + ADP + H(+). It catalyses the reaction L-threonyl-[protein] + ATP = O-phospho-L-threonyl-[protein] + ADP + H(+). The sequence is that of Serine/threonine-protein kinase-transforming protein mos (V-MOS) from Mus musculus (Mouse).